Consider the following 728-residue polypeptide: FYN-binding protein 2 (728 aa).

Disordered stretches follow at residues 17 to 76 (QNLD…PLQP), 250 to 287 (QAPE…RPPI), and 367 to 390 (PGKN…EKQP). Residues 42 to 75 (GTQSTQILANGKPLSSNHKQRTPYCSSSESQPLQ) show a composition bias toward polar residues. Positions 276 to 285 (GPPPPKPSRP) are enriched in pro residues. A compositionally biased stretch (basic and acidic residues) spans 377-390 (SAKHEDKKMKEKQP). Tyr-491 bears the Phosphotyrosine mark. An SH2-binding; to LCP2 motif is present at residues 521 to 524 (YEDV). Tyr-587 is modified (phosphotyrosine). Residues 664 to 724 (IVINTAVACS…LIEHLDFKHQ (61 aa)) form the SH3 domain.

As to quaternary structure, interacts with SKAP1, LCK and FYN. The phosphorylated form interacts with LCP2. Post-translationally, phosphorylation is required for its function in T-cell activation. In terms of tissue distribution, expressed in T-cells (at protein level). Widely expressed.

The protein resides in the membrane raft. Adapter protein that plays a role in T-cell receptor (TCR)-mediated activation of signaling pathways. Required for T-cell activation and integrin-mediated T-cell adhesion in response to TCR stimulation. The sequence is that of FYN-binding protein 2 from Homo sapiens (Human).